The chain runs to 94 residues: Citrate lyase acyl carrier protein (94 aa).

Ser14 is modified (O-(phosphoribosyl dephospho-coenzyme A)serine).

Belongs to the CitD family. Oligomer with a subunit composition of (alpha,beta,gamma)6.

The protein localises to the cytoplasm. Functionally, covalent carrier of the coenzyme of citrate lyase. This Halothermothrix orenii (strain H 168 / OCM 544 / DSM 9562) protein is Citrate lyase acyl carrier protein.